Consider the following 560-residue polypeptide: Choline/ethanolamine transporter FLVCR1 (560 aa).

A disordered region spans residues 1–43; the sequence is MARPDDEVGPAVAPGHPLGKGYLPVPKGAPDGEARLVPQNGPE. Over 1–92 the chain is Cytoplasmic; the sequence is MARPDDEVGP…EDVPCPACPP (92 aa). A helical membrane pass occupies residues 93-117; it reads RTALSPRRFVVLLIFSLYSLVNAFQ. Topologically, residues 118 to 135 are extracellular; sequence WIQYSSISNVFEDFYEVS. Residues 136-163 traverse the membrane as a helical segment; the sequence is PLHINWLSMVYMVAYVPLIFPATWLLDT. The Cytoplasmic portion of the chain corresponds to 164-165; it reads RG. A helical membrane pass occupies residues 166 to 185; it reads LRLTALLGSGLNCLGAWVKC. Residues 186-192 lie on the Extracellular side of the membrane; that stretch reads GSVQRHL. A helical membrane pass occupies residues 193 to 221; that stretch reads FWVTMLGQILCSVAQVFILGLPSPVASVW. Position 207 (Gln-207) interacts with ethanolamine. The Cytoplasmic segment spans residues 222-226; sequence FGPKE. A helical membrane pass occupies residues 227–252; the sequence is VSTACATAVLGNQLGTAVGFLLPPVL. Residues 253-270 are Extracellular-facing; sequence VPALGTQNSTGLLAHTQN. A glycan (N-linked (GlcNAc...) asparagine) is linked at Asn-270. A helical transmembrane segment spans residues 271 to 300; it reads NTDLLAHNINTMFYGTAFISTFLFFLTIIA. Topologically, residues 301–336 are cytoplasmic; sequence FKEKPPLPPSQAQAVLRDSPPEEYSYKSSIWNLCRN. The helical transmembrane segment at 337–367 threads the bilayer; the sequence is IPFVLLLVSYGIMTGAFYSISTLLNQIILTY. Over 368 to 371 the chain is Extracellular; it reads YVGE. Residues 372–400 form a helical membrane-spanning segment; that stretch reads EVNAGRIGLTLVVAGMVGSILCGLWLDYT. The Cytoplasmic portion of the chain corresponds to 401-402; it reads KT. The chain crosses the membrane as a helical span at residues 403-425; sequence YKQTTLIVYVLSFIGMLIFTFTL. The Extracellular segment spans residues 426–428; the sequence is NLG. The helical transmembrane segment at 429–458 threads the bilayer; that stretch reads YIIVVFFTGGILGFFMTGYLPLGFEFAVEI. Residues 459-466 are Cytoplasmic-facing; that stretch reads TYPESEGM. Residues 467 to 492 form a helical membrane-spanning segment; it reads SSGLLNTAAQILGIFFTLAQGKITTD. Gln-476 is an ethanolamine binding site. Residue Gln-476 coordinates choline. The Extracellular portion of the chain corresponds to 493–495; the sequence is YNS. A helical transmembrane segment spans residues 496-518; it reads PEAGNIFLCAWMFVGIILTALIK. The Cytoplasmic portion of the chain corresponds to 519–560; sequence SDLRRHNINTGLTNIDVKAVPVDSRVDPKPKVMVSIQSESSL. At Ser-542 the chain carries Phosphoserine.

The protein belongs to the major facilitator superfamily. Feline leukemia virus subgroup C receptor (TC 2.A.1.28.1) family.

It is found in the cell membrane. Its subcellular location is the mitochondrion membrane. The enzyme catalyses choline(out) = choline(in). The catalysed reaction is ethanolamine(in) = ethanolamine(out). It catalyses the reaction heme b(in) = heme b(out). Uniporter that mediates the transport of extracellular choline and ethanolamine into cells, thereby playing a key role in phospholipid biosynthesis. Choline and ethanolamine are the precursors of phosphatidylcholine and phosphatidylethanolamine, respectively, the two most abundant phospholipids. Transport is not coupled with proton transport and is exclusively driven by the choline (or ethanolamine) gradient across the plasma membrane. Also acts as a heme b transporter that mediates heme efflux from the cytoplasm to the extracellular compartment. Functionally, uniporter that mediates the transport of extracellular choline and ethanolamine into cells. Choline and ethanolamine are the precursors of phosphatidylcholine and phosphatidylethanolamine, respectively, the two most abundant phospholipids. Transport is not coupled with proton transport and is exclusively driven by the choline (or ethanolamine) gradient across the plasma membrane. Also acts as a heme b transporter that mediates heme efflux from the cytoplasm to the extracellular compartment. Heme export depends on the presence of HPX and is required to maintain intracellular free heme balance, protecting cells from heme toxicity. Heme export provides protection from heme or ferrous iron toxicities in liver, brain, sensory neurons and during erythropoiesis, a process in which heme synthesis intensifies. Possibly export coproporphyrin and protoporphyrin IX, which are both intermediate products in the heme biosynthetic pathway. Does not export bilirubin. The molecular mechanism of heme transport, whether electrogenic, electroneutral or coupled to other ions, remains to be elucidated. Its function is as follows. Heme transporter that promotes heme efflux from the mitochondrion to the cytoplasm. Essential for erythroid differentiation. The chain is Choline/ethanolamine transporter FLVCR1 (Flvcr1) from Mus musculus (Mouse).